The following is a 528-amino-acid chain: GMP synthase [glutamine-hydrolyzing] (528 aa).

The 192-residue stretch at 13-204 (AIVILDFGSQ…VYHICGCEPD (192 aa)) folds into the Glutamine amidotransferase type-1 domain. The active-site Nucleophile is the Cys90. Residues His178 and Glu180 contribute to the active site. One can recognise a GMPS ATP-PPase domain in the interval 205–403 (WTTTAFIEEA…LGLPEEIVRR (199 aa)). An ATP-binding site is contributed by 232–238 (SGGVDSS).

Homodimer.

The enzyme catalyses XMP + L-glutamine + ATP + H2O = GMP + L-glutamate + AMP + diphosphate + 2 H(+). It functions in the pathway purine metabolism; GMP biosynthesis; GMP from XMP (L-Gln route): step 1/1. Its function is as follows. Catalyzes the synthesis of GMP from XMP. This chain is GMP synthase [glutamine-hydrolyzing], found in Prochlorococcus marinus (strain MIT 9303).